The chain runs to 360 residues: Uroporphyrinogen decarboxylase (360 aa).

Substrate contacts are provided by residues 27–31 (RQSGR), phenylalanine 46, aspartate 77, tyrosine 154, threonine 209, and histidine 327.

It belongs to the uroporphyrinogen decarboxylase family. Homodimer.

It localises to the cytoplasm. The enzyme catalyses uroporphyrinogen III + 4 H(+) = coproporphyrinogen III + 4 CO2. The protein operates within porphyrin-containing compound metabolism; protoporphyrin-IX biosynthesis; coproporphyrinogen-III from 5-aminolevulinate: step 4/4. Its function is as follows. Catalyzes the decarboxylation of four acetate groups of uroporphyrinogen-III to yield coproporphyrinogen-III. This chain is Uroporphyrinogen decarboxylase, found in Wigglesworthia glossinidia brevipalpis.